The sequence spans 393 residues: Purine permease 14 (393 aa).

At alanine 2 the chain carries N-acetylalanine. A run of 10 helical transmembrane segments spans residues 46–66 (WPTITISIIFVIIGQSIAKLL), 90–110 (TQSLLQTVGFPLLLLPFLIFI), 133–153 (LAVIYICIGIIMSVQGRLAAM), 161–181 (GVFTLIYTAQLFFTPIFAAFI), 189–209 (WVVISVILAIITGALTLSSSF), 225–245 (WAALFAGICFALLLCNIQNVF), 268–288 (VIIFSSLVATIISVVGLLIAG), 308–328 (VMAMVGQAVSWQVYWVGIVGL), 339–359 (VISVITWPIVSVLVVIFFNFM), and 363–383 (FDAFKGVALVTAVLSAAAYFF).

The protein belongs to the purine permeases (TC 2.A.7.14) family. As to expression, expressed in seedlings, leaves, embryos, ovules, seeds and the root and shoot meristems. In heart-stage embryos, detected in cells that failed to respond to cytokinins, including the prospective cotyledons.

It localises to the cell membrane. Its function is as follows. Purine permease implicated in ATP-dependent cytokinin translocation that controls the spatiotemporal landscape of cytokinin signaling. Depletes ligands from the apoplast, which leads to a suppression of the cytokinin response. In Arabidopsis thaliana (Mouse-ear cress), this protein is Purine permease 14.